A 130-amino-acid chain; its full sequence is Glycine cleavage system H protein (130 aa).

A Lipoyl-binding domain is found at M25 to K106. At K66 the chain carries N6-lipoyllysine.

The protein belongs to the GcvH family. In terms of assembly, the glycine cleavage system is composed of four proteins: P, T, L and H. Requires (R)-lipoate as cofactor.

The glycine cleavage system catalyzes the degradation of glycine. The H protein shuttles the methylamine group of glycine from the P protein to the T protein. This Leptospira interrogans serogroup Icterohaemorrhagiae serovar copenhageni (strain Fiocruz L1-130) protein is Glycine cleavage system H protein.